Consider the following 334-residue polypeptide: Galactinol synthase 3 (334 aa).

Lys-97 is a catalytic residue. Mn(2+)-binding residues include Asp-113, Asp-115, and His-251.

Belongs to the glycosyltransferase 8 family. Galactosyltransferase subfamily. Requires a divalent metal cation as cofactor.

The protein localises to the cytoplasm. The catalysed reaction is myo-inositol + UDP-alpha-D-galactose = alpha-D-galactosyl-(1-&gt;3)-1D-myo-inositol + UDP + H(+). Galactinol synthase involved in the biosynthesis of raffinose family oligosaccharides (RFOs) that function as osmoprotectants. May promote plant stress tolerance. This chain is Galactinol synthase 3 (GOLS3), found in Arabidopsis thaliana (Mouse-ear cress).